A 597-amino-acid chain; its full sequence is Plasmepsin V (597 aa).

Residues 1 to 551 lie on the Lumenal side of the membrane; sequence MNNYFLRKEN…EKENIFLKVS (551 aa). Positions 33–88 form a coiled coil; sequence CNNVENKIDNVGKKIENVGKKIGDMENKNDNVENKNDNVENKNDNVGNKNDNVKNA. Residues 58-75 are compositionally biased toward basic and acidic residues; the sequence is ENKNDNVENKNDNVENKN. Residues 58 to 83 form a disordered region; the sequence is ENKNDNVENKNDNVENKNDNVGNKND. The Peptidase A1 domain maps to 107 to 521; it reads YFLDIDIGKP…DLQQNQIAFI (415 aa). Aspartate 125 is a catalytic residue. 7 cysteine pairs are disulfide-bonded: cysteine 135–cysteine 218, cysteine 138–cysteine 141, cysteine 162–cysteine 173, cysteine 167–cysteine 178, cysteine 266–cysteine 525, cysteine 396–cysteine 441, and cysteine 450–cysteine 486. The span at 289–298 shows a compositional bias: basic and acidic residues; it reads KEKQKMDKSD. The disordered stretch occupies residues 289–323; sequence KEKQKMDKSDNNSSNKGNVSIKLKNNDKNDDEENN. Residues 299-311 show a composition bias toward low complexity; the sequence is NNSSNKGNVSIKL. Aspartate 372 is a catalytic residue. Residues 552-572 form a helical membrane-spanning segment; it reads YINLYCLWLLLALTILLSLIL. Residues 573–597 are Cytoplasmic-facing; the sequence is YVRKMFYMDYFPLSDQNKSPIQEST.

Belongs to the peptidase A1 family. As to quaternary structure, component of a complex composed of SPC25 and PMV; the interaction is mediated via the transmembrane domains. The complex interacts with the SEC61 channel-forming translocon complex and is involved in the recognition and import of PEXEL motif-containing proteins into the ER for subsequent export. In terms of processing, it is not clear if the zymogen has a cleavable propeptide. In vitro, appears to be cleaved between Asn-87 and Ala-88. Cleavage of the putative propeptide is dispensable for catalytic activity.

It localises to the endoplasmic reticulum membrane. During the asexual blood stage, plays an essential role in the export of several proteins into the host erythrocytes by cleaving the pentameric localization motif RxLxE/Q/D (termed Plasmodium export element (PEXEL)) located downstream of the N-terminal secretory signal sequence. Specifically, cleaves after the leucine residue in the RxLxE/Q/D (or RxLxxE) motif of exported proteins including RESA, EMP2, EMP3, KAHRP, RIF/Rifin and STEVOR. Also, by regulating protein export, plays an essential role in gametocyte development and thus parasite transmission to the mosquito vector. This Plasmodium falciparum (isolate HB3) protein is Plasmepsin V.